A 340-amino-acid polypeptide reads, in one-letter code: MSFQSMASIAEAAREVAAASDLNTLEQIRLRWLGRKGVLTEAMQQLGQLSPETRREAGQLLNERKSEIQSLLQERKAELEAAAIHARLQQERLDVTLPGRREACGSAHPIRQTLEWIEHYFFGLGFETSDGPEIEDDYHNFAALNIPEDHPARAMHDTFYLDATRLLRTQTSTVQIRFLESHQPPLRMIATGRVYRRDSDITHTPMFHQVEGLLLDERASFADLRGLLSDFLHGFFAKPDLPVRFRPSYFPFTEPSAEIDIGCVICGGSGCRVCKQTGWLEVLGCGMVHPAVLAGAGVDGERFSGFAFGMGVERLTMLRYGVNDLRLFFENDLRFLKQFS.

Glu-254 is a Mg(2+) binding site.

Belongs to the class-II aminoacyl-tRNA synthetase family. Phe-tRNA synthetase alpha subunit type 1 subfamily. As to quaternary structure, tetramer of two alpha and two beta subunits. It depends on Mg(2+) as a cofactor.

It is found in the cytoplasm. The catalysed reaction is tRNA(Phe) + L-phenylalanine + ATP = L-phenylalanyl-tRNA(Phe) + AMP + diphosphate + H(+). In Acidithiobacillus ferrooxidans (strain ATCC 23270 / DSM 14882 / CIP 104768 / NCIMB 8455) (Ferrobacillus ferrooxidans (strain ATCC 23270)), this protein is Phenylalanine--tRNA ligase alpha subunit.